We begin with the raw amino-acid sequence, 204 residues long: Large ribosomal subunit protein bL25 (204 aa).

The protein belongs to the bacterial ribosomal protein bL25 family. CTC subfamily. Part of the 50S ribosomal subunit; part of the 5S rRNA/L5/L18/L25 subcomplex. Contacts the 5S rRNA. Binds to the 5S rRNA independently of L5 and L18.

Functionally, this is one of the proteins that binds to the 5S RNA in the ribosome where it forms part of the central protuberance. The polypeptide is Large ribosomal subunit protein bL25 (Burkholderia mallei (strain NCTC 10247)).